The sequence spans 827 residues: MSDEKKKGSAASAMPTAMAPPGLINKEDIPQVLPILPLRNSVFFPGGVLPLAVGRQKTIALIKDAVRDDQVIGVVTQRRAEEEDPGAADLYTMGTVARIVKLLKMGEDNYSLVVQGLARFRVVELVQEAPYLKARVDAVEDKTSSENVEVEALGINLKKLAREVIELMPELPAAATELVESITHPGHLADLIAANVDVPIEEKQAVLETVDLKARMKLVLELLNRKREILKLSNKIDSAVKGEMSKTQREYYLRQQLKAIKEELGEMGEEEEELDELQERLKKAGLPPDVEKVANKELNRLKTIPAASSEYTVARTYLDWIADLPWAKISEDNLDIENARQQLDKDHFGIKKVKKRILEYLAVRKLKNDMRGPILCLVGPPGVGKTSLGQSVAKATGRKFVRLSLGGVRDEAEIRGHRRTYVGALPGRFIQSMKKAGTKNPVMMLDEIDKLGADFRGDPSAALLEVLDPEQNNTFSDHYLDVPFDLSKVMFVATANQLDPIPGPLRDRMEIIELTGYTFEEKQSIARIHLVPKQLKEHGLSPDHIDITDEALLTLTTAYTREAGVRNLERRIADICRAVAVEVAGGKTEKQTINADRVKEILGPEMFYSEVAERTEVPGVATGLAWTAAGGDLLFIEATKMAGKGGMTLTGQLGDVMKESATAALSYLRSKAEQLGISPNFLEKTDLHLHFPAGSIPKDGPSAGVTILTALTSLLTGIRVRHDTAMTGEATLRGLVLPVGGIKEKVLAAHRAGIKRVILPERCRKDLIDVPDQARNELEFIFVTHMDDVLKAALETPPVGVAGTPGGEPGKEAPLPKPAESAPEVRA.

The segment at 1-22 (MSDEKKKGSAASAMPTAMAPPG) is disordered. Over residues 9–21 (SAASAMPTAMAPP) the composition is skewed to low complexity. The 195-residue stretch at 33–227 (LPILPLRNSV…LVLELLNRKR (195 aa)) folds into the Lon N-terminal domain. ATP is bound at residue 379 to 386 (GPPGVGKT). Residues 615 to 796 (TEVPGVATGL…DDVLKAALET (182 aa)) enclose the Lon proteolytic domain. Residues S702 and K745 contribute to the active site. Positions 799–827 (VGVAGTPGGEPGKEAPLPKPAESAPEVRA) are disordered.

Belongs to the peptidase S16 family. In terms of assembly, homohexamer. Organized in a ring with a central cavity.

It localises to the cytoplasm. It carries out the reaction Hydrolysis of proteins in presence of ATP.. Its function is as follows. ATP-dependent serine protease that mediates the selective degradation of mutant and abnormal proteins as well as certain short-lived regulatory proteins. Required for cellular homeostasis and for survival from DNA damage and developmental changes induced by stress. Degrades polypeptides processively to yield small peptide fragments that are 5 to 10 amino acids long. Binds to DNA in a double-stranded, site-specific manner. The protein is Lon protease 2 of Myxococcus xanthus.